The primary structure comprises 103 residues: Small ribosomal subunit protein uS10 (103 aa).

It belongs to the universal ribosomal protein uS10 family. As to quaternary structure, part of the 30S ribosomal subunit.

Its function is as follows. Involved in the binding of tRNA to the ribosomes. In Dechloromonas aromatica (strain RCB), this protein is Small ribosomal subunit protein uS10.